A 414-amino-acid chain; its full sequence is NADH-quinone oxidoreductase subunit D (414 aa).

The protein belongs to the complex I 49 kDa subunit family. In terms of assembly, NDH-1 is composed of 14 different subunits. Subunits NuoB, C, D, E, F, and G constitute the peripheral sector of the complex.

It localises to the cell inner membrane. The enzyme catalyses a quinone + NADH + 5 H(+)(in) = a quinol + NAD(+) + 4 H(+)(out). Its function is as follows. NDH-1 shuttles electrons from NADH, via FMN and iron-sulfur (Fe-S) centers, to quinones in the respiratory chain. The immediate electron acceptor for the enzyme in this species is believed to be ubiquinone. Couples the redox reaction to proton translocation (for every two electrons transferred, four hydrogen ions are translocated across the cytoplasmic membrane), and thus conserves the redox energy in a proton gradient. This is NADH-quinone oxidoreductase subunit D from Akkermansia muciniphila (strain ATCC BAA-835 / DSM 22959 / JCM 33894 / BCRC 81048 / CCUG 64013 / CIP 107961 / Muc).